The following is a 206-amino-acid chain: Guanylate kinase (206 aa).

In terms of domain architecture, Guanylate kinase-like spans 13 to 193; it reads PLLLVVSGPS…AVSEIMSIIS (181 aa). Residue 20 to 27 coordinates ATP; the sequence is GPSGVGKD.

It belongs to the guanylate kinase family.

It is found in the cytoplasm. It catalyses the reaction GMP + ATP = GDP + ADP. Essential for recycling GMP and indirectly, cGMP. The polypeptide is Guanylate kinase (Dehalococcoides mccartyi (strain ATCC BAA-2266 / KCTC 15142 / 195) (Dehalococcoides ethenogenes (strain 195))).